Reading from the N-terminus, the 356-residue chain is MMLFFSSFSDWFPGVNVFRYITFRTIAAMLTSGLIVFLFGPSIIASLKLRQGKGQPIRADGPQTHFKKAGTPTMGGLMILTGIVVSAFLWCNLSNIYFWVSLLVMLSFGAIGFYDDYLKVTKQTDKGFSGKARLSLEFFVAAIAAFIILQIGSSGFALPFLKDYLIHLGWFFIPFSAFVIVATGNAVNLTDGLDGLAIVPVMVAALSFALIAYLCGNMNFADYLQIHYVSGTGELAVLLGAVVGAGLGFLWFNAPPAAIFMGDTGSLALGGLLGTVAVATKHEIVLVLIGGLFVVEAFSVVIQVGYFKLTRKRVFLMAPIHHHFEKKGWTESQVVIRFWIISIVLALIGLSTLKLR.

A run of 10 helical transmembrane segments spans residues 25–45, 70–90, 93–113, 138–158, 164–184, 195–215, 235–255, 258–278, 284–304, and 333–353; these read TIAAMLTSGLIVFLFGPSIIA, GTPTMGGLMILTGIVVSAFLW, LSNIYFWVSLLVMLSFGAIGF, FFVAAIAAFIILQIGSSGFAL, YLIHLGWFFIPFSAFVIVATG, GLAIVPVMVAALSFALIAYLC, LAVLLGAVVGAGLGFLWFNAP, AIFMGDTGSLALGGLLGTVAV, IVLVLIGGLFVVEAFSVVIQV, and QVVIRFWIISIVLALIGLSTL.

This sequence belongs to the glycosyltransferase 4 family. MraY subfamily. Mg(2+) is required as a cofactor.

The protein localises to the cell inner membrane. It carries out the reaction UDP-N-acetyl-alpha-D-muramoyl-L-alanyl-gamma-D-glutamyl-meso-2,6-diaminopimeloyl-D-alanyl-D-alanine + di-trans,octa-cis-undecaprenyl phosphate = di-trans,octa-cis-undecaprenyl diphospho-N-acetyl-alpha-D-muramoyl-L-alanyl-D-glutamyl-meso-2,6-diaminopimeloyl-D-alanyl-D-alanine + UMP. It functions in the pathway cell wall biogenesis; peptidoglycan biosynthesis. Its function is as follows. Catalyzes the initial step of the lipid cycle reactions in the biosynthesis of the cell wall peptidoglycan: transfers peptidoglycan precursor phospho-MurNAc-pentapeptide from UDP-MurNAc-pentapeptide onto the lipid carrier undecaprenyl phosphate, yielding undecaprenyl-pyrophosphoryl-MurNAc-pentapeptide, known as lipid I. The polypeptide is Phospho-N-acetylmuramoyl-pentapeptide-transferase (Bartonella tribocorum (strain CIP 105476 / IBS 506)).